Reading from the N-terminus, the 329-residue chain is Protein-arginine N-acetylglucosaminyltransferase NleB (329 aa).

R13 carries N-beta-linked (GlcNAc) arginine; by autocatalysis glycosylation. 48–50 contributes to the UDP-N-acetyl-alpha-D-glucosamine binding site; the sequence is QWF. The N-beta-linked (GlcNAc) arginine; by autocatalysis glycan is linked to R53. A UDP-N-acetyl-alpha-D-glucosamine-binding site is contributed by Y72. R159 is a glycosylation site (N-beta-linked (GlcNAc) arginine; by autocatalysis). 219–222 provides a ligand contact to UDP-N-acetyl-alpha-D-glucosamine; the sequence is YLDA. Residues 221–223 carry the DXD motif motif; sequence DAD. D223 is a Mn(2+) binding site. The active-site Proton acceptor is the E253. R293 carries an N-beta-linked (GlcNAc) arginine; by autocatalysis glycan. Mn(2+)-binding residues include N320 and S322. Residues S322 and 327 to 329 contribute to the UDP-N-acetyl-alpha-D-glucosamine site; that span reads SSW.

This sequence belongs to the glycosyltransferase NleB family. Mn(2+) serves as cofactor. In terms of processing, auto-glycosylated: arginine GlcNAcylation is required for activity toward death domain-containing host target proteins.

The protein localises to the secreted. It localises to the host cell. The enzyme catalyses L-arginyl-[protein] + UDP-N-acetyl-alpha-D-glucosamine = N(omega)-(N-acetyl-beta-D-glucosaminyl)-L-arginyl-[protein] + UDP + H(+). Its function is as follows. Protein-arginine N-acetylglucosaminyltransferase effector that disrupts TNF signaling in infected cells, including NF-kappa-B signaling, apoptosis and necroptosis. Acts by catalyzing the transfer of a single N-acetylglucosamine (GlcNAc) to a conserved arginine residue in the death domain of host proteins FADD, TNFRSF1A and RIPK1: arginine GlcNAcylation prevents homotypic/heterotypic death domain interactions and assembly of the oligomeric TNF-alpha receptor complex, thereby disrupting TNF signaling. Has preference for host FADD as substrate compared to TNFRSF1A and RIPK1. Also acts on host proteins without a death domain: catalyzes GlcNAcylation of host GAPDH protein, thereby preventing GAPDH interaction with TRAF2 and TRAF3, leading to inhibit NF-kappa-B signaling and type I interferon production, respectively. Also displays intra-bacterial activity by mediating GlcNAcylation of glutathione synthetase GshB. Catalyzes auto-GlcNAcylation, which is required for activity toward death domain-containing host target proteins. In Citrobacter rodentium, this protein is Protein-arginine N-acetylglucosaminyltransferase NleB.